We begin with the raw amino-acid sequence, 901 residues long: Vacuolar import and degradation protein 22 (901 aa).

The segment covering 1-10 has biased composition (polar residues); the sequence is MRAMDTQVQS. The segment at 1–54 is disordered; it reads MRAMDTQVQSAERGLVLPPMNSTVSSATAATTATNTDTDTDGDRDEERESLAED. Asn21 is a glycosylation site (N-linked (GlcNAc...) asparagine). Residues 27-37 show a composition bias toward low complexity; the sequence is ATAATTATNTD. The BED-type zinc-finger motif lies at 66–122; sequence RDRSRYLGHFLGVDKMLEAVKCKYCGVIIRRQGNSISMAEASQTHLWSTHKIDPNAN. Cys87, Cys90, His110, and His115 together coordinate Zn(2+). N-linked (GlcNAc...) asparagine glycans are attached at residues Asn242 and Asn291. A helical membrane pass occupies residues 381–401; it reads YYHNCIISIINSAILPLFGTP. N-linked (GlcNAc...) asparagine glycans are attached at residues Asn540, Asn645, Asn649, Asn652, Asn662, Asn669, Asn673, Asn688, and Asn722. The span at 646–677 shows a compositional bias: low complexity; sequence NSHNTSNHSNMNIHTDNQTNNINNRSGNNSDN. The disordered stretch occupies residues 646–727; that stretch reads NSHNTSNHSN…NSNNNLSFGS (82 aa). Over residues 679–688 the composition is skewed to basic and acidic residues; sequence DNEHDNDNDN. A compositionally biased stretch (low complexity) spans 718-727; the sequence is NSNNNLSFGS.

It belongs to the VID22 family. Post-translationally, glycosylated.

The protein localises to the cell membrane. It is found in the nucleus. Its function is as follows. Has a role in the negative regulation of gluconeogenesis. Imports fructose-1,6-bisphosphatase (FBPase) into the intermediate vacuole import and degradation (Vid) vesicles. This is an indirect role and requires cyclophilin A. This is Vacuolar import and degradation protein 22 (VID22) from Saccharomyces cerevisiae (strain ATCC 204508 / S288c) (Baker's yeast).